Consider the following 427-residue polypeptide: MTNFILNENKQLSLAIEDENIENFYIDGTDLVRKIIRRSGSGVTSRVPVLSTQDLENKNLHELYDESWLRMKNRPNTELTTESINIADLFSGCGGLSLGVWEACRALGINPRFSFACDLNEAALSVYEKNFSPDFSLNESIEKHINGELGAPLTVEEQRIKDKVKKIDFILAGPPCQGHSDLNNHTRRKDPRNALLMRVSRVIELFQPSSVLVENVPGIIHDKSGSFKEFKNHLKTQGYYFDEIVLNAEKLGVSQARRRYFIFASKTPVSSLNQINEFYSTNSRPISWAISDLVENVGDDIFNTASEHSLENKRRIEYLFENNLFELPNSERPDCHRLKPHSYKSVYGRMYWDRPAPTITRGFGSTGQGRFVHSLLKRTITPHEAARIQFFPDFFNFGDLRRRQYQDVIGNAVPSKLSYLLALHQLR.

Residues 84–427 (INIADLFSGC…SYLLALHQLR (344 aa)) form the SAM-dependent MTase C5-type domain. The active site involves C176.

It belongs to the class I-like SAM-binding methyltransferase superfamily. C5-methyltransferase family. As to quaternary structure, monomer. May form a complex with YdiP, also seems to be active alone.

The catalysed reaction is a 2'-deoxycytidine in DNA + S-adenosyl-L-methionine = a 5-methyl-2'-deoxycytidine in DNA + S-adenosyl-L-homocysteine + H(+). With respect to regulation, somewhat inhibited by MgCl(2) and spermidine, strongly inhibited by MnCl(2). Functionally, a methylase, recognizes the double-stranded sequence 5'-YTCGAR-3', methylates C-3 on both strands, and protects the DNA from cleavage by the BsuMI endonuclease. In Bacillus subtilis (strain 168), this protein is Type II methyltransferase M1.BsuMI (ydiO).